We begin with the raw amino-acid sequence, 446 residues long: Exodeoxyribonuclease 7 large subunit (446 aa).

It belongs to the XseA family. As to quaternary structure, heterooligomer composed of large and small subunits.

Its subcellular location is the cytoplasm. It catalyses the reaction Exonucleolytic cleavage in either 5'- to 3'- or 3'- to 5'-direction to yield nucleoside 5'-phosphates.. In terms of biological role, bidirectionally degrades single-stranded DNA into large acid-insoluble oligonucleotides, which are then degraded further into small acid-soluble oligonucleotides. This Staphylococcus carnosus (strain TM300) protein is Exodeoxyribonuclease 7 large subunit.